The sequence spans 1481 residues: Cystic fibrosis transmembrane conductance regulator (1481 aa).

Residues 1–77 (MQRSPLEKAS…KLINALRRCF (77 aa)) are Cytoplasmic-facing. Residues 78 to 98 (FWRFMFYGILLYLGEVTKAVQ) form a helical membrane-spanning segment. Residues 81-365 (FMFYGILLYL…WAVQTWYDSL (285 aa)) enclose the ABC transmembrane type-1 1 domain. Topologically, residues 99–122 (PLLLGRIIASYDPDNKEERSIAIY) are extracellular. The helical transmembrane segment at 123 to 146 (LGIGLCLLFIVRTLLLHPAIFGLH) threads the bilayer. Topologically, residues 147 to 195 (HIGMQMRIAMFSLIYKKTLKLSSRVLDKISIGQLVSLLSNNLNKFDEGL) are cytoplasmic. Residues 196–216 (ALAHFVWIVPLQVALLMGLIW) form a helical membrane-spanning segment. The Extracellular segment spans residues 217–222 (ELLQAS). The chain crosses the membrane as a helical span at residues 223-243 (AFCGLGFLIVLALFQAGLGRM). Topologically, residues 244 to 298 (MMKYRDQRAGKINERLVITSEMIENIQSVKAYCWEEAMEKMIENLRQTELKLTRK) are cytoplasmic. Residues 299–319 (AAYVRYFNSSAFFFSGFFVVF) traverse the membrane as a helical segment. The Extracellular portion of the chain corresponds to 320–339 (LSVLPYALIKGIVLRKIFTT). Residues 340 to 358 (ISFCIVLRMAVTRQFPWAV) traverse the membrane as a helical segment. The Cytoplasmic portion of the chain corresponds to 359 to 858 (QTWYDSLGAI…YLRYITVHKS (500 aa)). Residues tryptophan 401, serine 434, 458-465 (GSTGAGKT), and glutamine 493 contribute to the ATP site. The ABC transporter 1 domain maps to 423–646 (NDDDSLFFSN…RPDFSSKLMG (224 aa)). A lipid anchor (S-palmitoyl cysteine) is attached at cysteine 524. Residues serine 549 and serine 660 each carry the phosphoserine modification. Positions 654 to 831 (SAERRNSILT…EEINEEDLKE (178 aa)) are disordered R region. Serine 670 carries the post-translational modification Phosphoserine; by PKA. A Phosphoserine modification is found at serine 686. A Glycyl lysine isopeptide (Lys-Gly) (interchain with G-Cter in ubiquitin) cross-link involves residue lysine 688. Phosphoserine is present on residues serine 700 and serine 712. Position 717 is a phosphothreonine (threonine 717). 6 positions are modified to phosphoserine: serine 737, serine 753, serine 768, serine 790, serine 795, and serine 813. The chain crosses the membrane as a helical span at residues 859–879 (LIFVLIWCLVIFLAEVAASLV). Positions 859 to 1155 (LIFVLIWCLV…AVNSSIDVDS (297 aa)) constitute an ABC transmembrane type-1 2 domain. Residues 880–918 (VLWFLGNTPPQDKGNSTYSRNNSYAVIITRTSSYYVFYI) lie on the Extracellular side of the membrane. N-linked (GlcNAc...) asparagine glycosylation is found at asparagine 894 and asparagine 900. A discontinuously helical transmembrane segment spans residues 919 to 939 (YVGVADTLLAMGFFRGLPLVH). Residues 940–990 (TLITVSKILHHKMLHSVLQAPMSTLNTLKAGGILNRFSKDIAILDDLLPLT) lie on the Cytoplasmic side of the membrane. A helical transmembrane segment spans residues 991–1011 (IFDFIQLLLIVIGAIAVVAVL). Topologically, residues 1012 to 1013 (QP) are extracellular. A helical membrane pass occupies residues 1014–1034 (YIFVATVPVIVAFIMLRAYFL). The Cytoplasmic portion of the chain corresponds to 1035–1095 (QTSQQLKQLE…TANWFLYLST (61 aa)). A helical transmembrane segment spans residues 1096-1116 (LRWFQMRIEMIFVIFFIAVTF). Topologically, residues 1117 to 1130 (ISILTTGEGEGTVG) are extracellular. A helical membrane pass occupies residues 1131 to 1151 (IILTLAMNIMSTLQWAVNSSI). Topologically, residues 1152–1481 (DVDSLMRSVS…TEEEVQDTRL (330 aa)) are cytoplasmic. Positions 1211-1444 (MTVKDLTAKY…RSLFRQAISP (234 aa)) constitute an ABC transporter 2 domain. ATP-binding positions include tyrosine 1220 and 1245-1252 (GRTGSGKS). Residues 1387-1481 (RTLKQAFADC…TEEEVQDTRL (95 aa)) are interaction with GORASP2. Residue cysteine 1396 is the site of S-palmitoyl cysteine attachment. Phosphoserine occurs at positions 1445 and 1457. The disordered stretch occupies residues 1462–1481 (QPQIAALKEETEEEVQDTRL). Residues 1471–1481 (ETEEEVQDTRL) show a composition bias toward acidic residues. A PDZ-binding motif is present at residues 1479-1481 (TRL).

It belongs to the ABC transporter superfamily. ABCC family. CFTR transporter (TC 3.A.1.202) subfamily. As to quaternary structure, monomer; does not require oligomerization for channel activity. May form oligomers in the membrane. Interacts with SLC26A3, SLC26A6 and NHERF1. Interacts with SHANK2. Interacts with MYO6. Interacts (via C-terminus) with GOPC (via PDZ domain); this promotes CFTR internalization and thereby decreases channel activity. Interacts with SLC4A7 through NHERF1. Found in a complex with MYO5B and RAB11A. Interacts with ANO1. Interacts with SLC26A8. Interacts with AHCYL1; the interaction increases CFTR activity. Interacts with CSE1L. The core-glycosylated form interacts with GORASP2 (via PDZ GRASP-type 1 domain) in respone to ER stress. Interacts with MARCHF2; the interaction leads to CFTR ubiqtuitination and degradation. Interacts with ADGRG2. N-glycosylated. In terms of processing, phosphorylated; cAMP treatment promotes phosphorylation and activates the channel. Dephosphorylation decreases the ATPase activity (in vitro). Phosphorylation at PKA sites activates the channel. Phosphorylation at PKC sites enhances the response to phosphorylation by PKA. Phosphorylated by AMPK; this inhibits channel activity. Post-translationally, ubiquitinated, leading to its degradation in the lysosome. Deubiquitination by USP10 in early endosomes enhances its endocytic recycling to the cell membrane. Ubiquitinated by RNF185 during ER stress. Ubiquitinated by MARCHF2.

It is found in the apical cell membrane. Its subcellular location is the early endosome membrane. It localises to the cell membrane. The protein localises to the recycling endosome membrane. The protein resides in the endoplasmic reticulum membrane. It is found in the nucleus. The catalysed reaction is ATP + H2O + closed Cl(-) channel = ADP + phosphate + open Cl(-) channel.. It carries out the reaction chloride(in) = chloride(out). The enzyme catalyses hydrogencarbonate(in) = hydrogencarbonate(out). It catalyses the reaction ATP + H2O = ADP + phosphate + H(+). Functionally, epithelial ion channel that plays an important role in the regulation of epithelial ion and water transport and fluid homeostasis. Mediates the transport of chloride ions across the cell membrane. Possesses an intrinsic ATPase activity and utilizes ATP to gate its channel; the passive flow of anions through the channel is gated by cycles of ATP binding and hydrolysis by the ATP-binding domains. The ion channel is also permeable to HCO(3)(-); selectivity depends on the extracellular chloride concentration. Exerts its function also by modulating the activity of other ion channels and transporters. Contributes to the regulation of the pH and the ion content of the epithelial fluid layer. Modulates the activity of the epithelial sodium channel (ENaC) complex, in part by regulating the cell surface expression of the ENaC complex. May regulate bicarbonate secretion and salvage in epithelial cells by regulating the transporter SLC4A7. Can inhibit the chloride channel activity of ANO1. Plays a role in the chloride and bicarbonate homeostasis during sperm epididymal maturation and capacitation. This is Cystic fibrosis transmembrane conductance regulator from Papio anubis (Olive baboon).